A 567-amino-acid chain; its full sequence is Geranylgeranyl transferase type-2 subunit alpha (567 aa).

6 PFTA repeats span residues 44–78 (LDES…QLEV), 88–122 (LVKA…RLPE), 124–158 (NWAR…QAAV), 159–193 (PPAE…QLHP), 207–241 (VLLK…RADP), and 363–397 (VLQS…ALDP). The residue at position 98 (serine 98) is a Phosphoserine. 5 LRR repeats span residues 442 to 463 (EVRV…EQLL), 464 to 486 (LVTH…AALR), 487 to 508 (CLEV…TNLP), 509 to 530 (RLQE…QPLT), and 534 to 555 (RLTL…SEHL).

This sequence belongs to the protein prenyltransferase subunit alpha family. As to quaternary structure, heterotrimer composed of RABGGTA, RABGGTB and CHM; within this trimer, RABGGTA and RABGGTB form the catalytic component B, while CHM (component A) mediates peptide substrate binding. The Rab GGTase dimer (RGGT) interacts with CHM (component A) prior to Rab protein binding; the association is stabilized by geranylgeranyl pyrophosphate (GGpp). The CHM:RGGT:Rab complex is destabilized by GGpp. Interacts with non-phosphorylated form of RAB8A; phosphorylation of RAB8A at 'Thr-72' disrupts this interaction.

It carries out the reaction geranylgeranyl diphosphate + L-cysteinyl-[protein] = S-geranylgeranyl-L-cysteinyl-[protein] + diphosphate. With respect to regulation, the enzymatic reaction requires the aid of a Rab escort protein (also called component A), such as CHM. Functionally, catalyzes the transfer of a geranylgeranyl moiety from geranylgeranyl diphosphate to both cysteines of Rab proteins with the C-terminal sequence -XXCC, -XCXC and -CCXX, such as RAB1A, RAB3A, RAB5A and RAB7A. The protein is Geranylgeranyl transferase type-2 subunit alpha (RABGGTA) of Bos taurus (Bovine).